Consider the following 690-residue polypeptide: Elongation factor G (690 aa).

The 275-residue stretch at 8–282 (ERVRNIGIAA…AVIDYLPAPV (275 aa)) folds into the tr-type G domain. Residues 17-24 (AHIDAGKT), 81-85 (DTPGH), and 135-138 (NKMD) each bind GTP.

Belongs to the TRAFAC class translation factor GTPase superfamily. Classic translation factor GTPase family. EF-G/EF-2 subfamily.

It is found in the cytoplasm. Functionally, catalyzes the GTP-dependent ribosomal translocation step during translation elongation. During this step, the ribosome changes from the pre-translocational (PRE) to the post-translocational (POST) state as the newly formed A-site-bound peptidyl-tRNA and P-site-bound deacylated tRNA move to the P and E sites, respectively. Catalyzes the coordinated movement of the two tRNA molecules, the mRNA and conformational changes in the ribosome. This Parasynechococcus marenigrum (strain WH8102) protein is Elongation factor G.